The sequence spans 457 residues: MSAGKIIQIIGAVIDVEFPQNAVPKVYDALKVESGLTLEVQQQLGGGVVRCIALGSSDGLKRGLKVENTGNPISVPVGTKTLGRIMNVLGEPIDEKGEIGAEETWAIHRAAPSYEEQSNSTELLETGIKVIDLICPFAKGGKVGLFGGAGVGKTVNMMELIRNIAIEHSGYSVFAGVGERTREGNDFYHEMTESNVLDKVSLVYGQMNEPPGNRLRVALTGLTMAEKFRDEGRDVLFFVDNIYRYTLAGTEVSALLGRMPSAVGYQPTLAEEMGVLQERITSTKTGSITSVQAVYVPADDLTDPSPATTFAHLDSTVVLSRNIASLGIYPAVDPLDSTSRQLDPLVVGQEHYDVARGVQGILQRYKELKDIIAILGMDELSEDDKLVVARARKIERFLSQPFFVAEVFTGSPGKYVSLKDTIRGFKGILDGEYDHIPEQAFYMVGSIEEVLEKAKKM.

147–154 (GGAGVGKT) is an ATP binding site.

Belongs to the ATPase alpha/beta chains family. In terms of assembly, F-type ATPases have 2 components, CF(1) - the catalytic core - and CF(0) - the membrane proton channel. CF(1) has five subunits: alpha(3), beta(3), gamma(1), delta(1), epsilon(1). CF(0) has three main subunits: a(1), b(2) and c(9-12). The alpha and beta chains form an alternating ring which encloses part of the gamma chain. CF(1) is attached to CF(0) by a central stalk formed by the gamma and epsilon chains, while a peripheral stalk is formed by the delta and b chains.

It is found in the cell inner membrane. It catalyses the reaction ATP + H2O + 4 H(+)(in) = ADP + phosphate + 5 H(+)(out). Its function is as follows. Produces ATP from ADP in the presence of a proton gradient across the membrane. The catalytic sites are hosted primarily by the beta subunits. This Histophilus somni (strain 129Pt) (Haemophilus somnus) protein is ATP synthase subunit beta.